Here is a 569-residue protein sequence, read N- to C-terminus: Urease subunit alpha (569 aa).

Residues 131 to 569 (GSIDTHIHFI…VPMAQRYFLL (439 aa)) form the Urease domain. Residues H136, H138, and K219 each coordinate Ni(2+). K219 bears the N6-carboxylysine mark. H221 lines the substrate pocket. Residues H248 and H274 each contribute to the Ni(2+) site. Catalysis depends on H322, which acts as the Proton donor. D362 contacts Ni(2+).

This sequence belongs to the metallo-dependent hydrolases superfamily. Urease alpha subunit family. Heterotrimer of UreA (gamma), UreB (beta) and UreC (alpha) subunits. Three heterotrimers associate to form the active enzyme. Ni cation serves as cofactor. Carboxylation allows a single lysine to coordinate two nickel ions.

The protein resides in the cytoplasm. It catalyses the reaction urea + 2 H2O + H(+) = hydrogencarbonate + 2 NH4(+). It functions in the pathway nitrogen metabolism; urea degradation; CO(2) and NH(3) from urea (urease route): step 1/1. This chain is Urease subunit alpha, found in Prochlorococcus marinus (strain AS9601).